Reading from the N-terminus, the 221-residue chain is Ependymin-1 (221 aa).

An N-terminal signal peptide occupies residues M1 to A21. N33, N73, and N97 each carry an N-linked (GlcNAc...) asparagine glycan.

The protein belongs to the ependymin family. Post-translationally, binds calcium through the terminal sialic acids. In terms of tissue distribution, EPDs are synthesized in the meninx and secreted in the cerebrospinal fluid.

The protein localises to the secreted. May play a role in neural plasticity. May be involved during axon regeneration. The chain is Ependymin-1 (epd1) from Oncorhynchus mykiss (Rainbow trout).